Reading from the N-terminus, the 546-residue chain is T-complex protein 1 subunit epsilon (546 aa).

It belongs to the TCP-1 chaperonin family. Heterooligomeric complex of about 850 to 900 kDa that forms two stacked rings, 12 to 16 nm in diameter.

It localises to the cytoplasm. Its function is as follows. Molecular chaperone; assists the folding of proteins upon ATP hydrolysis. Known to play a role, in vitro, in the folding of actin and tubulin. This is T-complex protein 1 subunit epsilon (cct5) from Schizosaccharomyces pombe (strain 972 / ATCC 24843) (Fission yeast).